Here is a 616-residue protein sequence, read N- to C-terminus: UDP-sugar pyrophosphorylase (616 aa).

The protein belongs to the USP family. Mg(2+) serves as cofactor. It depends on Mn(2+) as a cofactor.

The enzyme catalyses a monosaccharide 1-phosphate + UTP + H(+) = a UDP-monosaccharide + diphosphate. Its function is as follows. May function as the terminal enzyme of the myo-inositol oxidation (MIO) pathway. May also play a role in the salvage pathway for synthesis of nucleotide sugars. The sequence is that of UDP-sugar pyrophosphorylase (USP) from Oryza sativa subsp. japonica (Rice).